The following is a 666-amino-acid chain: Mitogen-activated protein kinase kinase kinase ANP1 (666 aa).

Residues 69 to 331 enclose the Protein kinase domain; it reads WRKGQLIGRG…ASELLKHPFV (263 aa). ATP is bound by residues 75 to 83 and K98; that span reads IGRGAFGTV. Positions 101–131 form a coiled coil; it reads LIAANFASKEKTQAHIQELEEEVKLLKNLSH. Residues K109 and K111 each participate in a glycyl lysine isopeptide (Lys-Gly) (interchain with G-Cter in ubiquitin) cross-link. D197 serves as the catalytic Proton acceptor. A compositionally biased stretch (basic and acidic residues) spans 452–464; it reads KFDESPGNGEKES. 3 disordered regions span residues 452 to 481, 536 to 592, and 635 to 666; these read KFDE…DDDE, GFLK…DGVS, and QEIM…SPGK. Over residues 538-558 the composition is skewed to low complexity; that stretch reads LKLPPKSRSPSRGPLGGSPSR. Residues 560–569 are compositionally biased toward polar residues; that stretch reads TDATSCSKSP. A coiled-coil region spans residues 620-643; that stretch reads KKWKEELDQELERKRQEIMRQAGL. Residues 647-660 show a composition bias toward basic and acidic residues; it reads PRDRGMSRQREKSR.

It belongs to the protein kinase superfamily. STE Ser/Thr protein kinase family. MAP kinase kinase kinase subfamily. As to expression, expressed in roots, inflorescence stems, flower buds and flowers. Low amount in rosette and cauline leaves.

The enzyme catalyses L-seryl-[protein] + ATP = O-phospho-L-seryl-[protein] + ADP + H(+). It catalyses the reaction L-threonyl-[protein] + ATP = O-phospho-L-threonyl-[protein] + ADP + H(+). In terms of biological role, may be involved in an oxidative stress-mediated signaling cascade that phosphorylates downstream MAP kinases MPK3 and MPK6. May suppress auxin signaling that promotes cell cycle. Functionally redundant to ANP2 and ANP3 in the positive regulation of cytokinesis. The chain is Mitogen-activated protein kinase kinase kinase ANP1 (ANP1) from Arabidopsis thaliana (Mouse-ear cress).